Here is a 463-residue protein sequence, read N- to C-terminus: Cytoplasmic tRNA 2-thiolation protein 2 (463 aa).

The protein belongs to the CTU2/NCS2 family.

The protein resides in the cytoplasm. It functions in the pathway tRNA modification; 5-methoxycarbonylmethyl-2-thiouridine-tRNA biosynthesis. Plays a central role in 2-thiolation of mcm(5)S(2)U at tRNA wobble positions of tRNA(Lys), tRNA(Glu) and tRNA(Gln). May act by forming a heterodimer with NCS6 that ligates sulfur from thiocarboxylated URM1 onto the uridine of tRNAs at wobble position. Prior mcm(5) tRNA modification by the elongator complex is required for 2-thiolation. May also be involved in protein urmylation. The protein is Cytoplasmic tRNA 2-thiolation protein 2 of Kluyveromyces lactis (strain ATCC 8585 / CBS 2359 / DSM 70799 / NBRC 1267 / NRRL Y-1140 / WM37) (Yeast).